Consider the following 157-residue polypeptide: 2-C-methyl-D-erythritol 2,4-cyclodiphosphate synthase (157 aa).

The a divalent metal cation site is built by D9 and H11. Residues 9–11 (DVH) and 35–36 (HS) contribute to the 4-CDP-2-C-methyl-D-erythritol 2-phosphate site. H43 is an a divalent metal cation binding site. 4-CDP-2-C-methyl-D-erythritol 2-phosphate is bound by residues 57–59 (DIG), 62–66 (FPDTD), 101–107 (AEKPKMA), 133–136 (TTTE), F140, and R143.

It belongs to the IspF family. As to quaternary structure, homotrimer. It depends on a divalent metal cation as a cofactor.

The enzyme catalyses 4-CDP-2-C-methyl-D-erythritol 2-phosphate = 2-C-methyl-D-erythritol 2,4-cyclic diphosphate + CMP. It participates in isoprenoid biosynthesis; isopentenyl diphosphate biosynthesis via DXP pathway; isopentenyl diphosphate from 1-deoxy-D-xylulose 5-phosphate: step 4/6. Functionally, involved in the biosynthesis of isopentenyl diphosphate (IPP) and dimethylallyl diphosphate (DMAPP), two major building blocks of isoprenoid compounds. Catalyzes the conversion of 4-diphosphocytidyl-2-C-methyl-D-erythritol 2-phosphate (CDP-ME2P) to 2-C-methyl-D-erythritol 2,4-cyclodiphosphate (ME-CPP) with a corresponding release of cytidine 5-monophosphate (CMP). The protein is 2-C-methyl-D-erythritol 2,4-cyclodiphosphate synthase of Listeria monocytogenes serotype 4b (strain CLIP80459).